The chain runs to 1631 residues: MEFGRQLKTLLKKNLLLKGKSKCSICCEIVFPIVIIGVLFAILALIKVTNSDYNSIDVTTFSRRVGPENKLLYGSEGSLNNDQSGVIETMKEQVATARGLTVAEVQDFFMEINDRTLMESFFKNYSMMVYGGVWFNSSTNGGGGGNNNDPIAAGGQFGYNIRLDSDDTADTSETGKVDGGDSSIYLNDNFASIQVAMDQAIFGYFGLDMVLNISGRHYPDPYTELWQEWITGRDAIIKSAGSVFITAALMMFSFRLVTDVVIEKETKIVEAMRMMSLNSLAYFSSWIITSLITSLPVTLLIVVIFKGSQLIYSTSWGIVIITFVLYLITLLLLSFIFSIFFNNSKFCGLLSFVIVIAINICGIFVSKNEFSVSVKLLLSIFSPIAFSNSIYIMSVKDLTMILNLNWDYIVTENQSILMLGIDIIIYIILIWYFEKVIPGEYGTKEKFYFLFTKNYWFGKKRSIGEIDDIESTFDSEDVETIPLKVLKNSTISIRNLRKEFETGDGLRVAVNDLYLDMFEDQIHALLGPNGCGKSTTIGMLTGLISPTSGSAFIRGYDITSQMSKIRPYIGCCLQTDIIWSQLTVLEHLVIYASLKGVEGRNIQREAERMATEVGLAEKMNAPAGSLSGGQKRKLCLGIAFIGRSKIIFLDEVTSGMDPVSRRQVWDFLLKYKKGKTIILTTHYLEEADYLGDRIAIISQGKLRCDGTSLFLKNRFGQGYLLTCNKKLENASNGFNTNQVSEFIKNFIPGASILTDSGAELSYRLPTESLSNFPQFFTEFDLNLSKFSIQTYGISVTSLEEVFISLGQEDSKKLNNNANGNNEFNKQNEMESLKLAIATPSDGINQIQQFKGLLIKRIQQSKKDARSFFLSIILPMALIIGSIILYKSMNDQKQVLFYNNSTQPLTMSLSIYTDSDNTINVPMQLLNNELEWSNLFNNSPYFNKFKYINESINFNDYLIDNYKLSIGAINFTNQPISIDDNNNGQSTNCSYIAYYNSDYIHSFPIHVNLINDALLRKFKNISISVTSMPFDHILTAFEISSSDINASAIIYFVFILMAGFSLMAGSFAGSIAQERTNRVKRLLYVSGCKKHIYWLSNLVWDFFFAFIISILSCSILAGVIKGAFKEQFGSFLLCLILLSCAIIPLGYLMSYKFQTYGKAVGAITAILFVFGLVFTIASLNVRIQAVVNQNSTTQKVADIIDLIFSIISPIFALNRIVFILSGFPGSTRLGTFKVDNYWSFDYLGTPLIVLAGHAVLWNVWILLLDYVPQIKGFFKNPKNLPAPSPPQDEDYDVSQERRRLLNMRPSEEPIQFKNLHKLFPGSGKNPSKTAVYNSTLGIPRGQTFGLLGLNGGGKSTTLSMLSGEIVPSSGEISINGYDVITNREKALGNISMVFQFDALISLLSAREHLWLFSRIKGIKESQIENCVEAFIKMVDLTRIANSGCGGYSGGNKRKVSLSMAMLGNPSVCFLDEISCGCDAVVRRQLWDVISELGKDKSIILTSHSMSEVEALCSRITIMKEGKYTCLNTIQGVKNRFGAGYSIDVKFKKEYLETGIQTILQSIPNCTVLDQHDVMASFEVPNPPGNPIKLSNIFSILSNLPILDDYNVGQTSLESVFLKLTGANHDQRINLYD.

The next 7 helical transmembrane spans lie at 25 to 45, 242 to 262, 285 to 305, 317 to 337, 346 to 366, 372 to 392, and 416 to 436; these read ICCE…ILAL, SVFI…DVVI, SWII…VVIF, GIVI…SFIF, FCGL…IFVS, VSVK…SIYI, and ILML…FEKV. The region spanning 491–724 is the ABC transporter 1 domain; it reads ISIRNLRKEF…FGQGYLLTCN (234 aa). ATP is bound at residue 527–534; sequence GPNGCGKS. The next 7 helical transmembrane spans lie at 866–886, 1047–1067, 1099–1119, 1127–1147, 1158–1178, 1198–1218, and 1242–1262; these read SFFL…ILYK, AIIY…GSFA, WDFF…AGVI, FGSF…LGYL, AVGA…IASL, IIDL…IVFI, and LGTP…WILL. The region spanning 1309–1544 is the ABC transporter 2 domain; the sequence is IQFKNLHKLF…FGAGYSIDVK (236 aa). Residue 1347–1354 participates in ATP binding; the sequence is GLNGGGKS.

The protein belongs to the ABC transporter superfamily. ABCA family.

Its subcellular location is the membrane. In Dictyostelium discoideum (Social amoeba), this protein is ABC transporter A family member 6 (abcA6).